The primary structure comprises 375 residues: Holliday junction branch migration complex subunit RuvB (375 aa).

Residues M1–P50 are disordered. The tract at residues E13–Y209 is large ATPase domain (RuvB-L). A compositionally biased stretch (polar residues) spans K19–Q28. Positions E40–R49 are enriched in basic and acidic residues. ATP-binding positions include I48, R49, G90, K93, T94, T95, E156–F158, R199, Y209, and R246. T94 lines the Mg(2+) pocket. A small ATPAse domain (RuvB-S) region spans residues E210–N280. The tract at residues P283–T375 is head domain (RuvB-H). Residues R338 and R343 each coordinate DNA.

The protein belongs to the RuvB family. In terms of assembly, homohexamer. Forms an RuvA(8)-RuvB(12)-Holliday junction (HJ) complex. HJ DNA is sandwiched between 2 RuvA tetramers; dsDNA enters through RuvA and exits via RuvB. An RuvB hexamer assembles on each DNA strand where it exits the tetramer. Each RuvB hexamer is contacted by two RuvA subunits (via domain III) on 2 adjacent RuvB subunits; this complex drives branch migration. In the full resolvosome a probable DNA-RuvA(4)-RuvB(12)-RuvC(2) complex forms which resolves the HJ.

The protein resides in the cytoplasm. It catalyses the reaction ATP + H2O = ADP + phosphate + H(+). Its function is as follows. The RuvA-RuvB-RuvC complex processes Holliday junction (HJ) DNA during genetic recombination and DNA repair, while the RuvA-RuvB complex plays an important role in the rescue of blocked DNA replication forks via replication fork reversal (RFR). RuvA specifically binds to HJ cruciform DNA, conferring on it an open structure. The RuvB hexamer acts as an ATP-dependent pump, pulling dsDNA into and through the RuvAB complex. RuvB forms 2 homohexamers on either side of HJ DNA bound by 1 or 2 RuvA tetramers; 4 subunits per hexamer contact DNA at a time. Coordinated motions by a converter formed by DNA-disengaged RuvB subunits stimulates ATP hydrolysis and nucleotide exchange. Immobilization of the converter enables RuvB to convert the ATP-contained energy into a lever motion, pulling 2 nucleotides of DNA out of the RuvA tetramer per ATP hydrolyzed, thus driving DNA branch migration. The RuvB motors rotate together with the DNA substrate, which together with the progressing nucleotide cycle form the mechanistic basis for DNA recombination by continuous HJ branch migration. Branch migration allows RuvC to scan DNA until it finds its consensus sequence, where it cleaves and resolves cruciform DNA. This chain is Holliday junction branch migration complex subunit RuvB, found in Synechococcus elongatus (strain ATCC 33912 / PCC 7942 / FACHB-805) (Anacystis nidulans R2).